The following is a 433-amino-acid chain: D-amino acid dehydrogenase (433 aa).

FAD is bound at residue Ile-3 to Trp-17.

It belongs to the DadA oxidoreductase family. FAD serves as cofactor.

It catalyses the reaction a D-alpha-amino acid + A + H2O = a 2-oxocarboxylate + AH2 + NH4(+). It participates in amino-acid degradation; D-alanine degradation; NH(3) and pyruvate from D-alanine: step 1/1. In terms of biological role, oxidative deamination of D-amino acids. The chain is D-amino acid dehydrogenase from Paracoccus denitrificans (strain Pd 1222).